The chain runs to 232 residues: Histone H1-II (232 aa).

A compositionally biased stretch (low complexity) spans 1–18 (MSDPAPEVAPAAPVASPA). 2 disordered regions span residues 1–44 (MSDP…PPVS) and 103–232 (GKGA…AKKA). An H15 domain is found at 39 to 114 (THPPVSEMVV…GASGSFKLPA (76 aa)). Basic residues-rich tracts occupy residues 149–171 (SIAK…KSTK) and 179–232 (AAKK…AKKA).

Belongs to the histone H1/H5 family.

Its subcellular location is the nucleus. The protein resides in the chromosome. Its function is as follows. Histones H1 are necessary for the condensation of nucleosome chains into higher-order structures. The polypeptide is Histone H1-II (Glyptotendipes barbipes (Midge)).